The chain runs to 616 residues: Mitochondrial Rho GTPase 2 (616 aa).

Residues 1 to 590 (MKRDVRILLL…HDTELSTASF (590 aa)) are Cytoplasmic-facing. A Miro 1 domain is found at 2 to 168 (KRDVRILLLG…FYYAQKAVLH (167 aa)). GTP is bound by residues G16, K17, T18, and S19. Mg(2+) is bound at residue T18. D57 contributes to the Mg(2+) binding site. The GTP site is built by S59, N118, K119, D121, A149, and K150. 2 EF-hand domains span residues 184 to 219 (QCKK…CFGN) and 304 to 339 (FGYQ…FPYT). 7 residues coordinate Ca(2+): D199, N201, E208, D317, D319, D321, and E328. The 162-residue stretch at 416 to 577 (RNVFLCRVIG…YSKLATAAAF (162 aa)) folds into the Miro 2 domain. Positions 428, 430, 431, 432, and 433 each coordinate GTP. S432 provides a ligand contact to Mg(2+). Residue E474 coordinates Mg(2+). K528, D530, and C559 together coordinate GTP. The helical; Anchor for type IV membrane protein transmembrane segment at 591–613 (WLRVALGATVAAVVGFTLYKALL) threads the bilayer. Topologically, residues 614–616 (RSK) are mitochondrial intermembrane.

It belongs to the mitochondrial Rho GTPase family. In terms of assembly, homodimer.

It is found in the mitochondrion outer membrane. It carries out the reaction GTP + H2O = GDP + phosphate + H(+). The enzyme catalyses ATP + H2O = ADP + phosphate + H(+). It catalyses the reaction UTP + H2O = UDP + phosphate + H(+). Atypical mitochondrial nucleoside-triphosphatase (NTPase) involved in mitochondrial trafficking. Probably involved in control of anterograde transport of mitochondria and their subcellular distribution. Can hydrolyze GTP, ATP and UTP. The sequence is that of Mitochondrial Rho GTPase 2 (rhot2) from Xenopus tropicalis (Western clawed frog).